Here is a 234-residue protein sequence, read N- to C-terminus: Large ribosomal subunit protein uL1 (234 aa).

Belongs to the universal ribosomal protein uL1 family. As to quaternary structure, part of the 50S ribosomal subunit.

In terms of biological role, binds directly to 23S rRNA. The L1 stalk is quite mobile in the ribosome, and is involved in E site tRNA release. Protein L1 is also a translational repressor protein, it controls the translation of the L11 operon by binding to its mRNA. The sequence is that of Large ribosomal subunit protein uL1 from Prochlorococcus marinus (strain SARG / CCMP1375 / SS120).